Here is a 210-residue protein sequence, read N- to C-terminus: Probable septum site-determining protein MinC (210 aa).

This sequence belongs to the MinC family. As to quaternary structure, interacts with MinD and FtsZ.

Its function is as follows. Cell division inhibitor that blocks the formation of polar Z ring septums. Rapidly oscillates between the poles of the cell to destabilize FtsZ filaments that have formed before they mature into polar Z rings. Prevents FtsZ polymerization. The sequence is that of Probable septum site-determining protein MinC from Thermotoga sp. (strain RQ2).